A 231-amino-acid polypeptide reads, in one-letter code: Small proline-rich protein 3 (231 aa).

Residues 1-104 (MSSYQQKQPF…GSGYSVVPQP (104 aa)) form a disordered region. Position 2 is an N-acetylserine (serine 2). 21 repeat units span residues 55-62 (EQGYVKIP), 63-70 (EQGSIKVP), 71-78 (DTGYTKIP), 79-86 (DSGNTKVP), 87-94 (ESGCTSVP), 95-102 (GSGYSVVP), 103-110 (QPGYTKVP), 111-118 (DQGYTKVP), 119-126 (ESGCTSVP), 127-134 (GSGYSVVP), 135-142 (QPGYTKVP), 143-150 (ESGCTSVP), 151-158 (GPGYPTVP), 159-166 (QPGYTKVP), 167-174 (ESGCTSVP), 175-182 (GSGYSVIP), 183-190 (QPSYTKVP), 191-198 (ESGCTSVP), 199-206 (GPGYPTVP), 207-214 (QPGYTKVQ), and 215-222 (EPNPSIVT). The 21 X 8 AA approximate tandem repeats stretch occupies residues 55–222 (EQGYVKIPEQ…VQEPNPSIVT (168 aa)). Residues 80–94 (SGNTKVPESGCTSVP) show a composition bias toward polar residues. The segment at 188-231 (KVPESGCTSVPGPGYPTVPQPGYTKVQEPNPSIVTPGLSQKKTK) is disordered. Polar residues predominate over residues 214–231 (QEPNPSIVTPGLSQKKTK).

It belongs to the cornifin (SPRR) family. As to expression, suprabasal layers of the squamous epithelia of esophagus, tongue and oral mucosa.

It localises to the cytoplasm. Can serve as a substrate in transglutaminase-catalyzed cross linking reactions and can function as a cross-linked envelope precursor. The sequence is that of Small proline-rich protein 3 (SPRR3) from Oryctolagus cuniculus (Rabbit).